The sequence spans 355 residues: Guanine nucleotide-binding protein G(i) subunit alpha (355 aa).

Residue Gly2 is the site of N-myristoyl glycine attachment. Cys3 carries the S-palmitoyl cysteine lipid modification. One can recognise a G-alpha domain in the interval Arg33–Phe355. A G1 motif region spans residues Lys36–Thr49. Residues Gly41–Ser48, Leu176–Thr182, Asp201–Gln205, Asn270–Asp273, and Ala327 each bind GTP. Ser48 and Thr182 together coordinate Mg(2+). The G2 motif stretch occupies residues Asp174 to Thr182. A G3 motif region spans residues Phe197–Arg206. The G4 motif stretch occupies residues Ile266 to Asp273. The segment at Thr325–Thr330 is G5 motif.

Belongs to the G-alpha family. G(i/o/t/z) subfamily. In terms of assembly, g proteins are composed of 3 units; alpha, beta and gamma. The alpha chain contains the guanine nucleotide binding site.

Its function is as follows. Guanine nucleotide-binding proteins (G proteins) are involved as modulators or transducers in various transmembrane signaling systems. The protein is Guanine nucleotide-binding protein G(i) subunit alpha of Homarus americanus (American lobster).